The chain runs to 338 residues: Phenylalanine--tRNA ligase alpha subunit (338 aa).

Position 253 (E253) interacts with Mg(2+).

It belongs to the class-II aminoacyl-tRNA synthetase family. Phe-tRNA synthetase alpha subunit type 1 subfamily. In terms of assembly, tetramer of two alpha and two beta subunits. It depends on Mg(2+) as a cofactor.

It localises to the cytoplasm. The catalysed reaction is tRNA(Phe) + L-phenylalanine + ATP = L-phenylalanyl-tRNA(Phe) + AMP + diphosphate + H(+). This Gloeobacter violaceus (strain ATCC 29082 / PCC 7421) protein is Phenylalanine--tRNA ligase alpha subunit.